Consider the following 870-residue polypeptide: Radial spoke head 10 homolog B2 (870 aa).

Residues 1–16 (MVKEKKKADKKGEKSA) show a composition bias toward basic and acidic residues. Positions 1-44 (MVKEKKKADKKGEKSARSPSSLSDNLDFSKQDGNTTRQEMSPAG) are disordered. The segment covering 17–39 (RSPSSLSDNLDFSKQDGNTTRQE) has biased composition (polar residues). MORN repeat units follow at residues 86–108 (YEGEKVRGLYEGEGFAAFQGGCT), 109–131 (YRGMFSEGLMHGQGTYIWADGLK), 132–154 (YEGDFVKNVPMNHGVYTWPDGSM), 155–177 (YEGEVVNGMRNGFGMFKCSTQPV), 179–201 (YIGHWCNGKRHGKGSIYYNQEGT), 204–226 (YEGDWVQNIKKGWGIRCYKSGNI), 227–249 (YEGQWEDNMRHGEGRMRWLTTNE), 251–273 (YTGRWERGIQNGFGTHTWFLKRI), 284–306 (YIGEFVNGYRHGRGKFYYASGAM), and 307–329 (YDGEWVSNKKHGMGRLTFKNGRV). The disordered stretch occupies residues 674–704 (NKSPSAVMSHESDAAHSDSARSSSSKLELSP). Basic and acidic residues predominate over residues 683–692 (HESDAAHSDS). The span at 693–703 (ARSSSSKLELS) shows a compositional bias: low complexity. The stretch at 784–811 (KEKIRADRLRSTAQAQQRKMEDDELEAR) forms a coiled coil. A disordered region spans residues 840–870 (VSSSHLILDPPKEDVTVSPSSKTITSKKKKK).

Interacts with RSPH6A. Does not appear to be part of the axonemal radial spoke complexes 1 or 2.

It is found in the cytoplasm. It localises to the cytoskeleton. The protein resides in the cilium axoneme. The protein localises to the cell projection. Its subcellular location is the cilium. It is found in the flagellum. Functionally, may function as part of the axonemal radial spoke complex 3 (RS3). Radial spoke complexes are important for ciliary motility. In Homo sapiens (Human), this protein is Radial spoke head 10 homolog B2 (RSPH10B2).